Reading from the N-terminus, the 277-residue chain is Large ribosomal subunit protein uL2 (277 aa).

The tract at residues 218-277 is disordered; that stretch reads PTVRGSVMNPNDHPHGGGEGKAPVGRKAPSTPWGKPALGLKTRNKKAKSDKLIVRRRNEK. Positions 264-277 are enriched in basic and acidic residues; sequence AKSDKLIVRRRNEK.

Belongs to the universal ribosomal protein uL2 family. As to quaternary structure, part of the 50S ribosomal subunit. Forms a bridge to the 30S subunit in the 70S ribosome.

One of the primary rRNA binding proteins. Required for association of the 30S and 50S subunits to form the 70S ribosome, for tRNA binding and peptide bond formation. It has been suggested to have peptidyltransferase activity; this is somewhat controversial. Makes several contacts with the 16S rRNA in the 70S ribosome. This Streptococcus pyogenes serotype M4 (strain MGAS10750) protein is Large ribosomal subunit protein uL2.